The following is a 529-amino-acid chain: Calcium/calmodulin-dependent protein kinase type II subunit gamma (529 aa).

A Protein kinase domain is found at 14 to 272 (YQLFEELGKG…ADQALKHPWV (259 aa)). ATP is bound by residues 20–28 (LGKGAFSVV) and Lys43. Catalysis depends on Asp136, which acts as the Proton acceptor. Residues 283–292 (HRQETVECLR) form an autoinhibitory domain region. Residues Thr287, Thr306, and Thr307 each carry the phosphothreonine; by autocatalysis modification. The tract at residues 294–316 (FNARRKLKGAILTTMLVSRNFSA) is calmodulin-binding. Phosphoserine is present on residues Ser311, Ser334, Ser349, Ser352, and Ser455. The segment at 324 to 353 (KSDGGVKKRKSSSSVHLMPQSNNKNSLVSP) is disordered. Polar residues predominate over residues 342-352 (PQSNNKNSLVS).

The protein belongs to the protein kinase superfamily. CAMK Ser/Thr protein kinase family. CaMK subfamily. In terms of assembly, CAMK2 is composed of 4 different chains: alpha (CAMK2A), beta (CAMK2B), gamma (CAMK2G), and delta (CAMK2D). The different isoforms assemble into homo- or heteromultimeric holoenzymes composed of 12 subunits with two hexameric rings stacked one on top of the other. Post-translationally, autophosphorylation of Thr-287 following activation by Ca(2+)/calmodulin. Phosphorylation of Thr-287 locks the kinase into an activated state.

The protein resides in the sarcoplasmic reticulum membrane. It catalyses the reaction L-seryl-[protein] + ATP = O-phospho-L-seryl-[protein] + ADP + H(+). It carries out the reaction L-threonyl-[protein] + ATP = O-phospho-L-threonyl-[protein] + ADP + H(+). Activated by Ca(2+)/calmodulin. Binding of calmodulin results in conformational change that relieves intrasteric autoinhibition and allows autophosphorylation of Thr-287 which turns the kinase in a constitutively active form and confers to the kinase a Ca(2+)-independent activity. Calcium/calmodulin-dependent protein kinase that functions autonomously after Ca(2+)/calmodulin-binding and autophosphorylation, and is involved in sarcoplasmic reticulum Ca(2+) transport in skeletal muscle and may function in dendritic spine and synapse formation and neuronal plasticity. In slow-twitch muscles, is involved in regulation of sarcoplasmic reticulum (SR) Ca(2+) transport and in fast-twitch muscle participates in the control of Ca(2+) release from the SR through phosphorylation of the ryanodine receptor-coupling factor triadin. In the central nervous system, it is involved in the regulation of neurite formation and arborization. It may participate in the promotion of dendritic spine and synapse formation and maintenance of synaptic plasticity which enables long-term potentiation (LTP) and hippocampus-dependent learning. In response to interferon-gamma (IFN-gamma) stimulation, catalyzes phosphorylation of STAT1, stimulating the JAK-STAT signaling pathway. This Mus musculus (Mouse) protein is Calcium/calmodulin-dependent protein kinase type II subunit gamma (Camk2g).